A 472-amino-acid chain; its full sequence is MPREIITLQVGQCGNQIGMEFWKQLCLEHGISKEGMLEDFATQGGDRKDVFFYQADDEHYIPRALLLDLEPRVINGIQNSEYRNLYNHENVFVADHGGGAGNNWASGYHQGEQVEEDIMDMIDREADGSDSLEGFVLCHSIAGGTGSGMGSYLLEALNDRYSKKLVQTYSVFPNQMETSDVVVQPYNSLLTLNKRLTINADCVVVLDNTALNRIAVDRLHIPNPTFAQTNSLVSTVMSASTTTLRYPGYMNNDLVGLVASLIPTPRCHFLMTGYTPLTVERQANAIRKTTVLDVMRRLLQAKNIMVSSYARTKEASQAKYISILNIIQGEVDPTQVHKSLQRIRERKLANFIEWGPASIQVALSRKSPYVQTAHRVSGLMLASHTSIRHLFSKCINQYEKLRKKQAFLDNYRKFPMFADNDLTEFDESREIVQSLVDEYKACESADYIKWGMEDRSKTLSADGTMDLSLPSS.

142–148 (AGGTGSG) contacts GTP.

This sequence belongs to the tubulin family.

It is found in the cytoplasm. The protein resides in the cytoskeleton. Its subcellular location is the microtubule organizing center. Functionally, tubulin is the major constituent of microtubules. The gamma chain is found at microtubule organizing centers (MTOC) such as the spindle poles, suggesting that it is involved in the minus-end nucleation of microtubule assembly. The polypeptide is Tubulin gamma chain (TUBG) (Anemia phyllitidis (Fern)).